The following is a 239-amino-acid chain: Octanoyl-[acyl-carrier-protein]:protein N-octanoyltransferase LIPT2, mitochondrial (239 aa).

The transit peptide at 1 to 18 (MSVPVLRVRRLGLVGYAE) directs the protein to the mitochondrion. Residues 37 to 217 (GSPGGALLLC…AFEEEFQCQL (181 aa)) enclose the BPL/LPL catalytic domain. Residues 81–88 (RGGLITFH), 147–149 (AIG), and 160–162 (GLA) contribute to the substrate site. C178 functions as the Acyl-thioester intermediate in the catalytic mechanism. A disordered region spans residues 220–239 (EQNPEQNPVQNRPDRDAGPL).

Belongs to the LipB family.

Its subcellular location is the mitochondrion. The enzyme catalyses octanoyl-[ACP] + L-lysyl-[protein] = N(6)-octanoyl-L-lysyl-[protein] + holo-[ACP] + H(+). The protein operates within protein modification; protein lipoylation via endogenous pathway; protein N(6)-(lipoyl)lysine from octanoyl-[acyl-carrier-protein]: step 1/2. Functionally, catalyzes the transfer of endogenously produced octanoic acid from octanoyl-acyl-carrier-protein (octanoyl-ACP) onto the lipoyl domains of lipoate-dependent enzymes such as the protein H of the glycine cleavage system (GCSH). Lipoyl-ACP can also act as a substrate although octanoyl-ACP is likely to be the physiological substrate. This is Octanoyl-[acyl-carrier-protein]:protein N-octanoyltransferase LIPT2, mitochondrial (lipt2) from Xenopus tropicalis (Western clawed frog).